Consider the following 632-residue polypeptide: Thioredoxin domain-containing protein C959.05c (632 aa).

The signal sequence occupies residues 1-22 (MKLFLYHFTFIVYYFIISFSYA). Residues Asn-35, Asn-41, and Asn-140 are each glycosylated (N-linked (GlcNAc...) asparagine). The region spanning 153–284 (SDSSSTDPAF…LLSYSNQVAS (132 aa)) is the Thioredoxin domain. Cysteines 209 and 212 form a disulfide. Asn-557 is a glycosylation site (N-linked (GlcNAc...) asparagine). Residues 583–603 (LIVFNLLIALLILSILTIISA) form a helical membrane-spanning segment.

This sequence belongs to the protein disulfide isomerase family.

Its subcellular location is the endoplasmic reticulum membrane. It carries out the reaction Catalyzes the rearrangement of -S-S- bonds in proteins.. Acts as a membrane-bound chaperone in endoplasmic reticulum quality control. Probably facilitates presentation of substrate to membrane-bound components of the degradation machinery. This is Thioredoxin domain-containing protein C959.05c from Schizosaccharomyces pombe (strain 972 / ATCC 24843) (Fission yeast).